A 427-amino-acid polypeptide reads, in one-letter code: Histidine--tRNA ligase (427 aa).

It belongs to the class-II aminoacyl-tRNA synthetase family. As to quaternary structure, homodimer.

It is found in the cytoplasm. The catalysed reaction is tRNA(His) + L-histidine + ATP = L-histidyl-tRNA(His) + AMP + diphosphate + H(+). This is Histidine--tRNA ligase from Alteromonas mediterranea (strain DSM 17117 / CIP 110805 / LMG 28347 / Deep ecotype).